A 477-amino-acid polypeptide reads, in one-letter code: MYSLLIALLCAGTAVDAQALQQRQAGTTLTVDLSTTYQRIDGFGTSEAFQRAVQMSRLPEEGQRRALDVLFSTTNGAGLSILRNGIGSSPDMSSDHMVSIAPKSPGSPNNPLIYSWDGSDNKQLWVSQEAVHTYGVKTIYADAWSAPGYMKTNGNDANGGTLCGLSGAQCASGDWRQAYADYLTKYVEFYQESNVTVTHLGFINEPELTTSYASMRFSASQAAEFIRILYPTIQKSNLTYKPTIACCDAEGWNSQAGMLGALSSVNSMFGLVTAHAYTSQPGFSMNTPHPVWMTEAADLQGAWTSAWYSYGGAGEGWTWANNVYNAIVNGNASAYLYWIGAQTGNTNSHMVHIDANAGTVEPSKRLWALGQWSRFVRPGARRVAVSGASGSLRTAAFRNEDGSVAVVVINSGGDAAVNVRLASSSSADQQPASAKAWATDNSRAIEEIQASFADGVATVNVPSRSMTTVVLYPAADA.

The first 19 residues, 1–19, serve as a signal peptide directing secretion; sequence MYSLLIALLCAGTAVDAQA. N194, N237, and N331 each carry an N-linked (GlcNAc...) asparagine glycan.

The protein belongs to the glycosyl hydrolase 30 family.

The protein resides in the secreted. With respect to regulation, activity is enhanced by 10 mM Co(2+), Cu 2(2+) and Mn(2+) to levels as high as 44%. Partial inhibition of activity from 5 to 15% is observed in the presence of the following compouinds at a centration of 10 mM (from higher inhibition to lower): EDTA &gt; Mg(2+) &gt; urea, Zn(2+) &gt; Fe(3+). Functionally, xylanase exhibiting endo- and exo-xylanase activity. Shows the highest activity toward beechwood glucuronoxylan, which consists of a beta-1,4-linked xylose backbone decorated with the methylated form of D-glucuronic acid (MeGlcA) attached directly to the main chain at xylose C2. Also acts against wheat arabinoxylan, a xylan without MeGlcA substituents along the main chain, but the xylanase activity is about two orders of magnitude lower than that achieved in the case of beechwood xylan. Shows no activity against carob galactomannan, konjac glucomannan, or barley beta-glucan. The recombinant xylanase also exhibits an exo-activity by releasing processively disaccharide units from the non-reducing end of linear and decorated xylooligosaccharides (XOS). In Thermothelomyces thermophilus (strain ATCC 42464 / BCRC 31852 / DSM 1799) (Sporotrichum thermophile), this protein is GH30 family xylanase.